Here is a 425-residue protein sequence, read N- to C-terminus: Phosphoribosylamine--glycine ligase (425 aa).

The ATP-grasp domain occupies Lys-109–Gln-315. Residue Ile-135–Ser-195 participates in ATP binding. Mg(2+) is bound by residues Glu-285 and Asn-287.

Belongs to the GARS family. The cofactor is Mg(2+). Mn(2+) is required as a cofactor.

The catalysed reaction is 5-phospho-beta-D-ribosylamine + glycine + ATP = N(1)-(5-phospho-beta-D-ribosyl)glycinamide + ADP + phosphate + H(+). It functions in the pathway purine metabolism; IMP biosynthesis via de novo pathway; N(1)-(5-phospho-D-ribosyl)glycinamide from 5-phospho-alpha-D-ribose 1-diphosphate: step 2/2. This is Phosphoribosylamine--glycine ligase from Nostoc sp. (strain PCC 7120 / SAG 25.82 / UTEX 2576).